A 319-amino-acid chain; its full sequence is Dehydrogenase/reductase SDR family member 9 (319 aa).

The signal sequence occupies residues 1–20 (MLLWVLALLFLCAFLWNYKG). Residues 34-58 (ITGC…RVIA) and Asp83 contribute to the NAD(+) site. Substrate is bound at residue Ser164. Catalysis depends on Tyr176, which acts as the Proton acceptor. Lys180 is a binding site for NAD(+).

Belongs to the short-chain dehydrogenases/reductases (SDR) family. In terms of assembly, homotetramer. Highly expressed in epithelium of estrus uterus.

The protein resides in the microsome membrane. Its subcellular location is the endoplasmic reticulum membrane. It carries out the reaction 3beta-hydroxy-5alpha-pregnane-20-one + NAD(+) = 5alpha-pregnane-3,20-dione + NADH + H(+). The catalysed reaction is 17beta-hydroxy-5alpha-androstan-3-one + NAD(+) = 5alpha-androstan-3,17-dione + NADH + H(+). The enzyme catalyses androsterone + NAD(+) = 5alpha-androstan-3,17-dione + NADH + H(+). It catalyses the reaction 5alpha-androstane-3alpha,17beta-diol + NAD(+) = 17beta-hydroxy-5alpha-androstan-3-one + NADH + H(+). It carries out the reaction all-trans-retinol + NAD(+) = all-trans-retinal + NADH + H(+). The catalysed reaction is 3alpha-hydroxy-5alpha-pregnan-20-one + NAD(+) = 5alpha-pregnane-3,20-dione + NADH + H(+). Functionally, 3-alpha-hydroxysteroid dehydrogenase that converts 3-alpha-tetrahydroprogesterone (allopregnanolone) to dihydroxyprogesterone and 3-alpha-androstanediol to dihydroxyprogesterone. Plays also role in the biosynthesis of retinoic acid from retinaldehyde. Can utilize both NADH and NADPH. This Rattus norvegicus (Rat) protein is Dehydrogenase/reductase SDR family member 9 (Dhrs9).